A 283-amino-acid chain; its full sequence is Protein/nucleic acid deglycase HchA (283 aa).

Positions 86, 91, and 123 each coordinate Zn(2+). Catalysis depends on C185, which acts as the Nucleophile.

It belongs to the peptidase C56 family. HchA subfamily. In terms of assembly, homodimer.

It localises to the cytoplasm. The enzyme catalyses N(omega)-(1-hydroxy-2-oxopropyl)-L-arginyl-[protein] + H2O = lactate + L-arginyl-[protein] + H(+). It catalyses the reaction N(6)-(1-hydroxy-2-oxopropyl)-L-lysyl-[protein] + H2O = lactate + L-lysyl-[protein] + H(+). The catalysed reaction is S-(1-hydroxy-2-oxopropyl)-L-cysteinyl-[protein] + H2O = lactate + L-cysteinyl-[protein] + H(+). It carries out the reaction N(omega)-(1-hydroxy-2-oxoethyl)-L-arginyl-[protein] + H2O = L-arginyl-[protein] + glycolate + H(+). The enzyme catalyses N(6)-(1-hydroxy-2-oxoethyl)-L-lysyl-[protein] + H2O = glycolate + L-lysyl-[protein] + H(+). It catalyses the reaction S-(1-hydroxy-2-oxoethyl)-L-cysteinyl-[protein] + H2O = glycolate + L-cysteinyl-[protein] + H(+). The catalysed reaction is N(2)-(1-hydroxy-2-oxopropyl)-dGTP + H2O = lactate + dGTP + H(+). It carries out the reaction N(2)-(1-hydroxy-2-oxopropyl)-GTP + H2O = lactate + GTP + H(+). The enzyme catalyses N(2)-(1-hydroxy-2-oxopropyl)-GDP + H2O = lactate + GDP + H(+). It catalyses the reaction N(2)-(1-hydroxy-2-oxopropyl)-GMP + H2O = lactate + GMP + H(+). The catalysed reaction is N(2)-(1-hydroxy-2-oxoethyl)-dGTP + H2O = dGTP + glycolate + H(+). It carries out the reaction N(2)-(1-hydroxy-2-oxoethyl)-GTP + H2O = glycolate + GTP + H(+). The enzyme catalyses N(2)-(1-hydroxy-2-oxoethyl)-GDP + H2O = glycolate + GDP + H(+). It catalyses the reaction N(2)-(1-hydroxy-2-oxoethyl)-GMP + H2O = glycolate + GMP + H(+). The catalysed reaction is an N(2)-(1-hydroxy-2-oxopropyl)-guanosine in RNA + H2O = a guanosine in RNA + lactate + H(+). It carries out the reaction an N(2)-(1-hydroxy-2-oxopropyl)-2'-deoxyguanosine in DNA + H2O = a 2'-deoxyguanosine in DNA + lactate + H(+). The enzyme catalyses an N(2)-(1-hydroxy-2-oxoethyl)-guanosine in RNA + H2O = a guanosine in RNA + glycolate + H(+). It catalyses the reaction an N(2)-(1-hydroxy-2-oxoethyl)-2'-deoxyguanosine in DNA + H2O = a 2'-deoxyguanosine in DNA + glycolate + H(+). Functionally, protein and nucleotide deglycase that catalyzes the deglycation of the Maillard adducts formed between amino groups of proteins or nucleotides and reactive carbonyl groups of glyoxals. Thus, functions as a protein deglycase that repairs methylglyoxal- and glyoxal-glycated proteins, and releases repaired proteins and lactate or glycolate, respectively. Deglycates cysteine, arginine and lysine residues in proteins, and thus reactivates these proteins by reversing glycation by glyoxals. Acts on early glycation intermediates (hemithioacetals and aminocarbinols), preventing the formation of Schiff bases and advanced glycation endproducts (AGE). Also functions as a nucleotide deglycase able to repair glycated guanine in the free nucleotide pool (GTP, GDP, GMP, dGTP) and in DNA and RNA. Is thus involved in a major nucleotide repair system named guanine glycation repair (GG repair), dedicated to reversing methylglyoxal and glyoxal damage via nucleotide sanitization and direct nucleic acid repair. Plays an important role in protecting cells from carbonyl stress. The polypeptide is Protein/nucleic acid deglycase HchA (Escherichia coli O8 (strain IAI1)).